The chain runs to 194 residues: Aminodeoxychorismate/anthranilate synthase component 2 (194 aa).

A Glutamine amidotransferase type-1 domain is found at 1–194 (MILMIDNYDS…IETYRKEVIA (194 aa)). Residues C79, H168, and E170 contribute to the active site.

As to quaternary structure, monomer. Heterodimer consisting of two non-identical subunits: a glutamine amidotransferase subunit (PabA) and a aminodeoxychorismate synthase subunit (PabB).

The enzyme catalyses chorismate + L-glutamine = anthranilate + pyruvate + L-glutamate + H(+). It carries out the reaction chorismate + L-glutamine = 4-amino-4-deoxychorismate + L-glutamate. It participates in amino-acid biosynthesis; L-tryptophan biosynthesis; L-tryptophan from chorismate: step 1/5. The protein operates within cofactor biosynthesis; tetrahydrofolate biosynthesis; 4-aminobenzoate from chorismate: step 1/2. Its function is as follows. Part of a heterodimeric complex that catalyzes the two-step biosynthesis of 4-amino-4-deoxychorismate (ADC), a precursor of p-aminobenzoate (PABA) and tetrahydrofolate. In the first step, a glutamine amidotransferase (PabA) generates ammonia as a substrate that, along with chorismate, is used in the second step, catalyzed by aminodeoxychorismate synthase (PabB) to produce ADC. PabA converts glutamine into glutamate only in the presence of stoichiometric amounts of PabB. Also involved in the biosynthesis of anthranilate. Complements a glutamine amidotransferase-negative mutant. The chain is Aminodeoxychorismate/anthranilate synthase component 2 from Bacillus subtilis (strain 168).